The chain runs to 299 residues: Oxygen-dependent coproporphyrinogen-III oxidase (299 aa).

Residue Ser-92 coordinates substrate. Residues His-96 and His-106 each coordinate Mn(2+). His-106 (proton donor) is an active-site residue. 108–110 (NVR) is a binding site for substrate. 2 residues coordinate Mn(2+): His-145 and His-175. Residues 240-275 (YVEFNLVWDRGTLFGLQTGGRTESILMSMPPLVRWE) are important for dimerization. Residue 258–260 (GGR) participates in substrate binding.

It belongs to the aerobic coproporphyrinogen-III oxidase family. As to quaternary structure, homodimer. It depends on Mn(2+) as a cofactor.

It is found in the cytoplasm. The catalysed reaction is coproporphyrinogen III + O2 + 2 H(+) = protoporphyrinogen IX + 2 CO2 + 2 H2O. Its pathway is porphyrin-containing compound metabolism; protoporphyrin-IX biosynthesis; protoporphyrinogen-IX from coproporphyrinogen-III (O2 route): step 1/1. In terms of biological role, involved in the heme biosynthesis. Catalyzes the aerobic oxidative decarboxylation of propionate groups of rings A and B of coproporphyrinogen-III to yield the vinyl groups in protoporphyrinogen-IX. In Escherichia coli O127:H6 (strain E2348/69 / EPEC), this protein is Oxygen-dependent coproporphyrinogen-III oxidase.